Reading from the N-terminus, the 1282-residue chain is Clustered mitochondria protein homolog (1282 aa).

The segment at 1–50 (MADASQATTPAAEGNPVPEVPETQTPPADVNGTTEQEQTEEGAEQALEDQ) is disordered. A compositionally biased stretch (low complexity) spans 16-36 (PVPEVPETQTPPADVNGTTEQ). Residues 37–47 (EQTEEGAEQAL) are compositionally biased toward acidic residues. Residues 331–575 (DNTRSQETYL…RITPLDIAWM (245 aa)) form the Clu domain. The stretch at 623 to 650 (EEKKEGEEATEEAKTEEIKTEEAEKSEE) forms a coiled coil. Basic and acidic residues-rich tracts occupy residues 624 to 661 (EKKEGEEATEEAKTEEIKTEEAEKSEEPKAEETEKTEE) and 668 to 680 (VAEKKDEEAAKED). Disordered regions lie at residues 624–680 (EKKE…AKED) and 913–945 (PVAEKPVAPAPAPVEDGNKKKKKKKAARETSPV). TPR repeat units follow at residues 1021-1054 (AQMYHTLSQLYYQLGQKDAAVELSRKAAIVAERT), 1063-1096 (VLNYLNLSLFLHQRGDSKEALLYARHALDLWKVI), and 1105-1138 (ITTMNNYAVMLQSIKAYHESRRWFEESLRVCNKV). The interval 1257–1282 (VENSEKKKGGKKSKGPSNPKKRGGKA) is disordered. Residues 1264 to 1282 (KGGKKSKGPSNPKKRGGKA) show a composition bias toward basic residues.

Belongs to the CLU family. In terms of assembly, may associate with the eukaryotic translation initiation factor 3 (eIF-3) complex.

The protein resides in the cytoplasm. MRNA-binding protein involved in proper cytoplasmic distribution of mitochondria. The polypeptide is Clustered mitochondria protein homolog (Neurospora crassa (strain ATCC 24698 / 74-OR23-1A / CBS 708.71 / DSM 1257 / FGSC 987)).